The primary structure comprises 209 residues: Large ribosomal subunit protein uL3c (209 aa).

Residues P132–R154 form a disordered region.

The protein belongs to the universal ribosomal protein uL3 family. Part of the 50S ribosomal subunit.

It localises to the plastid. Its subcellular location is the cyanelle. One of the primary rRNA binding proteins, it binds directly near the 3'-end of the 23S rRNA, where it nucleates assembly of the 50S subunit. The sequence is that of Large ribosomal subunit protein uL3c (rpl3) from Cyanophora paradoxa.